Here is a 1319-residue protein sequence, read N- to C-terminus: Chitin-binding domain protein cbd-1 (1319 aa).

The signal sequence occupies residues 1 to 19 (MGPQLATVSLLLLTFFSNS). 3 Chitin-binding type-2 domains span residues 28 to 83 (ATEC…ECRV), 96 to 141 (EFDC…TQDC), and 190 to 236 (DFDC…QSCD). Disulfide bonds link Cys61/Cys72, Cys128/Cys141, and Cys222/Cys235. Positions 250-271 (YSTSTITTPQEDDSEYSSTTSA) are disordered. In terms of domain architecture, Chitin-binding type-2 4 spans 304–357 (PFVCQEGQVNSFGMCSSRFNRCQNNSVRSKQCPVNTLFESSLVMCVFDLPQCQP). N-linked (GlcNAc...) asparagine glycosylation occurs at Asn327. An intrachain disulfide couples Cys335 to Cys348. Positions 504–524 (KNRHSKKQLGPHEDPDGYDDE) are disordered. The span at 513–524 (GPHEDPDGYDDE) shows a compositional bias: basic and acidic residues. The Chitin-binding type-2 5 domain occupies 566–614 (NKDCQQYTTPTFLTFGDCFDQFIFCSGNGINRMAACPIGETFDKTLRSC). Cys601 and Cys614 are disulfide-bonded. A disordered region spans residues 649–682 (VTTQSTWNDQPSTTQAPNSYESYTTQYSSNDVPS). Chitin-binding type-2 domains lie at 689-745 (GDRC…ECGS), 782-838 (GDRC…KCQT), and 883-942 (VDTC…ACDE). A disulfide bridge connects residues Cys721 and Cys734. Residues 742 to 764 (ECGSQGSTSSPVITTPGQDQSSN) are disordered. A compositionally biased stretch (polar residues) spans 745 to 764 (SQGSTSSPVITTPGQDQSSN). Cystine bridges form between Cys814–Cys827 and Cys916–Cys929. Polar residues predominate over residues 984 to 995 (TGSTKYSTTDSG). Residues 984-1031 (TGSTKYSTTDSGEYTIPYGDETTSTRSYDRADNDSEDEEEDDVEHDQK) are disordered. An N-linked (GlcNAc...) asparagine glycan is attached at Asn1016. Over residues 1017-1027 (DSEDEEEDDVE) the composition is skewed to acidic residues. Chitin-binding type-2 domains follow at residues 1029–1081 (DQKC…GCGK), 1105–1163 (EGRC…ACTV), 1179–1237 (SAFC…GCEN), and 1242–1298 (NGEC…SCSG). 4 disulfide bridges follow: Cys1060–Cys1073, Cys1139–Cys1152, Cys1213–Cys1226, and Cys1274–Cys1287. The segment covering 1297–1312 (SGQASDSNSSYGSSTY) has biased composition (low complexity). A disordered region spans residues 1297 to 1319 (SGQASDSNSSYGSSTYNDDKSGY). N-linked (GlcNAc...) asparagine glycosylation is present at Asn1304.

It is found in the secreted. It localises to the extracellular space. Its subcellular location is the extracellular matrix. In unfertilized oocytes, maintains egg-1 and egg-2 at the plasma membrane together with chitin synthase chs-1 and kinase mbk-2. Essential for the formation of a continuous and cohesive chitin layer following fertilization. The protein is Chitin-binding domain protein cbd-1 of Caenorhabditis elegans.